A 356-amino-acid polypeptide reads, in one-letter code: Golgi-resident adenosine 3',5'-bisphosphate 3'-phosphatase (356 aa).

The residue at position 1 (methionine 1) is an N-acetylmethionine. The Cytoplasmic segment spans residues methionine 1–glycine 12. Residues valine 13–alanine 33 traverse the membrane as a helical segment. The Lumenal segment spans residues glycine 34–histidine 356. Residues valine 82–methionine 104 are disordered. Aspartate 108 serves as the catalytic Proton acceptor. 4 residues coordinate Mg(2+): glutamate 131, aspartate 172, leucine 174, and aspartate 175. The active-site Proton acceptor is threonine 177. The AMP site is built by serine 240 and histidine 243. Asparagine 257 carries an N-linked (GlcNAc...) asparagine glycan. Residues glycine 266 and lysine 270 each coordinate AMP. Aspartate 298 provides a ligand contact to Mg(2+).

It belongs to the inositol monophosphatase superfamily. Mg(2+) is required as a cofactor. Post-translationally, contains N-linked glycan resistant to endoglycosydase H.

It is found in the golgi apparatus. The protein resides in the trans-Golgi network membrane. It carries out the reaction adenosine 3',5'-bisphosphate + H2O = AMP + phosphate. It functions in the pathway sulfur metabolism. With respect to regulation, strongly inhibited by lithium. Its function is as follows. Exhibits 3'-nucleotidase activity toward adenosine 3',5'-bisphosphate (PAP), namely hydrolyzes adenosine 3',5'-bisphosphate into adenosine 5'-monophosphate (AMP) and a phosphate. May play a role in the formation of skeletal elements derived through endochondral ossification, possibly by clearing adenosine 3',5'-bisphosphate produced by Golgi sulfotransferases during glycosaminoglycan sulfation. Has no activity toward 3'-phosphoadenosine 5'-phosphosulfate (PAPS) or inositol phosphate (IP) substrates including I(1)P, I(1,4)P2, I(1,3,4)P3, I(1,4,5)P3 and I(1,3,4,5)P4. The chain is Golgi-resident adenosine 3',5'-bisphosphate 3'-phosphatase (Bpnt2) from Rattus norvegicus (Rat).